Consider the following 144-residue polypeptide: Bacilliredoxin BT9727_3899 (144 aa).

Belongs to the bacilliredoxin family.

In Bacillus thuringiensis subsp. konkukian (strain 97-27), this protein is Bacilliredoxin BT9727_3899.